The sequence spans 833 residues: Leucine--tRNA ligase (833 aa).

Positions 41–52 match the 'HIGH' region motif; that stretch reads PYPSGAGLHVGH. A 'KMSKS' region motif is present at residues 610 to 614; it reads KMSKS. Lys613 is an ATP binding site.

Belongs to the class-I aminoacyl-tRNA synthetase family.

It is found in the cytoplasm. The enzyme catalyses tRNA(Leu) + L-leucine + ATP = L-leucyl-tRNA(Leu) + AMP + diphosphate. This chain is Leucine--tRNA ligase, found in Streptococcus pneumoniae (strain Hungary19A-6).